A 465-amino-acid chain; its full sequence is Glutamate--tRNA ligase 2 (465 aa).

Residues 8 to 18 (PSPTGLMHLGN) carry the 'HIGH' region motif. The 'KMSKS' region signature appears at 249–253 (PLSKR). Lys252 provides a ligand contact to ATP.

The protein belongs to the class-I aminoacyl-tRNA synthetase family. Glutamate--tRNA ligase type 1 subfamily. In terms of assembly, monomer.

It localises to the cytoplasm. It catalyses the reaction tRNA(Glu) + L-glutamate + ATP = L-glutamyl-tRNA(Glu) + AMP + diphosphate. Functionally, catalyzes the attachment of glutamate to tRNA(Glu) in a two-step reaction: glutamate is first activated by ATP to form Glu-AMP and then transferred to the acceptor end of tRNA(Glu). The sequence is that of Glutamate--tRNA ligase 2 from Coxiella burnetii (strain CbuK_Q154) (Coxiella burnetii (strain Q154)).